We begin with the raw amino-acid sequence, 456 residues long: tRNA modification GTPase MnmE (456 aa).

(6S)-5-formyl-5,6,7,8-tetrahydrofolate-binding residues include Arg24, Glu81, and Lys120. The region spanning 216–379 (GMTVVIAGRP…LRDHLKACMG (164 aa)) is the TrmE-type G domain. Asn226 contacts K(+). Residues 226-231 (NAGKSS), 245-251 (TDIAGTT), 270-273 (DTAG), and 335-338 (NKAD) each bind GTP. Ser230 is a binding site for Mg(2+). Positions 245, 247, and 250 each coordinate K(+). Thr251 is a binding site for Mg(2+). Lys456 is a (6S)-5-formyl-5,6,7,8-tetrahydrofolate binding site.

The protein belongs to the TRAFAC class TrmE-Era-EngA-EngB-Septin-like GTPase superfamily. TrmE GTPase family. Homodimer. Heterotetramer of two MnmE and two MnmG subunits. The cofactor is K(+).

The protein resides in the cytoplasm. Exhibits a very high intrinsic GTPase hydrolysis rate. Involved in the addition of a carboxymethylaminomethyl (cmnm) group at the wobble position (U34) of certain tRNAs, forming tRNA-cmnm(5)s(2)U34. The protein is tRNA modification GTPase MnmE of Pseudomonas putida (strain GB-1).